Reading from the N-terminus, the 37-residue chain is MKVRASVKKMCEKCRVIRRHGRVMVICPNPKHKQRQG.

The protein belongs to the bacterial ribosomal protein bL36 family.

The sequence is that of Large ribosomal subunit protein bL36 from Synechococcus sp. (strain CC9311).